The chain runs to 37 residues: Esculentin-2JDa (37 aa).

A disulfide bridge links Cys31 with Cys37.

Expressed by the skin glands.

The protein resides in the secreted. Functionally, has antibacterial activity against E.coli and S.aureus strains. The chain is Esculentin-2JDa from Odorrana jingdongensis (Jingdong frog).